The primary structure comprises 377 residues: Probable aspartic-type endopeptidase CTSD (377 aa).

In terms of domain architecture, Peptidase A1 spans 1–292 (SLIDTGASRT…DFDKNRVGLA (292 aa)). Residue Asp-4 is part of the active site. A glycan (N-linked (GlcNAc...) asparagine) is linked at Asn-58. Residue Asp-186 is part of the active site. The interval 296–351 (YGETKDPPSSSHPPPAPTSNKASGGSPGLPEQSGTSSATTSTTGEPSSGSTASPSA) is disordered. Residues 328–351 (SGTSSATTSTTGEPSSGSTASPSA) show a composition bias toward low complexity. Residue Ser-350 is the site of GPI-anchor amidated serine attachment. Positions 351 to 377 (AASSVSMSAWLSLAVFLSTASSLILWD) are cleaved as a propeptide — removed in mature form.

It belongs to the peptidase A1 family.

It is found in the cell membrane. In terms of biological role, secreted aspartic-type endopeptidase which is secreted and contributes to virulence. The protein is Probable aspartic-type endopeptidase CTSD (CTSD) of Arthroderma otae (strain ATCC MYA-4605 / CBS 113480) (Microsporum canis).